Reading from the N-terminus, the 391-residue chain is Probable methanogen homoaconitase large subunit (391 aa).

Residues cysteine 275, cysteine 333, and cysteine 336 each coordinate [4Fe-4S] cluster.

Belongs to the aconitase/IPM isomerase family. LeuC type 2 subfamily. As to quaternary structure, heterotetramer of 2 HacA and 2 HacB proteins.

The enzyme catalyses (2R)-homocitrate = (2R,3S)-homoisocitrate. The catalysed reaction is (2R)-homocitrate = cis-homoaconitate + H2O. It catalyses the reaction (2R,3S)-homoisocitrate = cis-homoaconitate + H2O. It carries out the reaction cis-(homo)2aconitate + H2O = (2R,3S)-iso(homo)2citrate. The enzyme catalyses cis-(homo)3aconitate + H2O = (2R,3S)-iso(homo)3citrate. It participates in organic acid metabolism; 2-oxosuberate biosynthesis. Component of a hydro-lyase with broad substrate specificity for cis-unsaturated tricarboxylic acids. Catalyzes both the reversible dehydration of (R)-homocitrate ((R)-2-hydroxybutane-1,2,4-tricarboxylate) to produce cis-homoaconitate ((Z)-but-1-ene-1,2,4-tricarboxylate), and its hydration to homoisocitrate ((1R,2S)-1-hydroxybutane-1,2,4-tricarboxylate). Is also able to hydrate the analogous longer chain substrates cis-homo(2)-aconitate, cis-homo(3)-aconitate. These reactions are part of the biosynthesis pathway of coenzyme B. The sequence is that of Probable methanogen homoaconitase large subunit (hacA) from Methanosarcina mazei (strain ATCC BAA-159 / DSM 3647 / Goe1 / Go1 / JCM 11833 / OCM 88) (Methanosarcina frisia).